Consider the following 200-residue polypeptide: MSKVLVLYYSTYGHLETMAQAVAEGARSAGATVDVKRVPETVPQEIARSAHFKLDQSAPVATVTELENYDAIIVGAPTRFGRMPSQMGSFLDQAGGLWARGALNGKVGAAFTSTATQHGGQETTLFSIITNLLHFGMVIVGLPYSFQGQMTLDEVVGGAPYGATTIAGGQGQRQPSATELDGARFQGRLVAETANKLFGG.

The 187-residue stretch at Val4 to Val190 folds into the Flavodoxin-like domain. Residues Ser10–Leu15 and Thr78–Phe80 contribute to the FMN site. An NAD(+)-binding site is contributed by Tyr12. Position 98 (Trp98) interacts with substrate. FMN contacts are provided by residues Ser113 to Gly119 and His134.

This sequence belongs to the WrbA family. FMN serves as cofactor.

The catalysed reaction is a quinone + NADH + H(+) = a quinol + NAD(+). The enzyme catalyses a quinone + NADPH + H(+) = a quinol + NADP(+). The sequence is that of NAD(P)H dehydrogenase (quinone) from Acidovorax ebreus (strain TPSY) (Diaphorobacter sp. (strain TPSY)).